The chain runs to 340 residues: Extracellular matrix protein-binding protein emp (340 aa).

The N-terminal stretch at 1–26 (MKKKLLVLTMSTLFATQIMNSNHAKA) is a signal peptide.

Its subcellular location is the cell surface. Its function is as follows. Adhesin that binds to the host cell extracellular matrix proteins fibronectin, fibrinogen, collagen, and vitronectin. The polypeptide is Extracellular matrix protein-binding protein emp (emp) (Staphylococcus aureus (strain USA300)).